Here is a 75-residue protein sequence, read N- to C-terminus: MAAKPFFRRRKTDPFEGENAPKIDYKDTRLLQRYISERGKIVPSRITAVGAKNQRALAKAIKRARFLALLPYAVK.

The segment covering 1 to 11 (MAAKPFFRRRK) has biased composition (basic residues). A disordered region spans residues 1–21 (MAAKPFFRRRKTDPFEGENAP).

Belongs to the bacterial ribosomal protein bS18 family. As to quaternary structure, part of the 30S ribosomal subunit. Forms a tight heterodimer with protein bS6.

In terms of biological role, binds as a heterodimer with protein bS6 to the central domain of the 16S rRNA, where it helps stabilize the platform of the 30S subunit. This Jannaschia sp. (strain CCS1) protein is Small ribosomal subunit protein bS18.